We begin with the raw amino-acid sequence, 511 residues long: Maturase K (511 aa).

It belongs to the intron maturase 2 family. MatK subfamily.

The protein resides in the plastid. It localises to the chloroplast. Functionally, usually encoded in the trnK tRNA gene intron. Probably assists in splicing its own and other chloroplast group II introns. This chain is Maturase K, found in Nandina domestica (Heavenly bamboo).